A 276-amino-acid chain; its full sequence is MIEIKNLKFKYNQDQTSYTLNDVSFHVKRGEWLSIVGHNGSGKSTTARLIGGLLVADSGQIIVDGQELTEETVWDIRDKIGMVFQNPDNQFVGATVEDDVAFGLENKGLPYKEMVSRVQEALSFVGMMDFKDREPARLSGGQKQRVAIAGIIAMRPSILILDEATSMLDPEGRQELIQSIEDIRQQYGMTVLSITHDLDEVAMSNRVLVLKQGKVESISSPRELFSRGSELVDLGLDIPFSALLTQKLKNQGLIDCEGYLTEKELVEQLWEYLSKM.

An ABC transporter domain is found at 2–237 (IEIKNLKFKY…GSELVDLGLD (236 aa)). Position 37–44 (37–44 (GHNGSGKS)) interacts with ATP.

Belongs to the ABC transporter superfamily. Energy-coupling factor EcfA family. In terms of assembly, forms a stable energy-coupling factor (ECF) transporter complex composed of 2 membrane-embedded substrate-binding proteins (S component), 2 ATP-binding proteins (A component) and 2 transmembrane proteins (T component).

Its subcellular location is the cell membrane. Functionally, ATP-binding (A) component of a common energy-coupling factor (ECF) ABC-transporter complex. Unlike classic ABC transporters this ECF transporter provides the energy necessary to transport a number of different substrates. This is Energy-coupling factor transporter ATP-binding protein EcfA1 from Streptococcus thermophilus (strain ATCC BAA-491 / LMD-9).